The following is an 85-amino-acid chain: Large ribosomal subunit protein bL31B (85 aa).

It belongs to the bacterial ribosomal protein bL31 family. Type B subfamily. In terms of assembly, part of the 50S ribosomal subunit.

The chain is Large ribosomal subunit protein bL31B from Porphyromonas gingivalis (strain ATCC 33277 / DSM 20709 / CIP 103683 / JCM 12257 / NCTC 11834 / 2561).